We begin with the raw amino-acid sequence, 505 residues long: Sodium-coupled neutral amino acid transporter 3 (505 aa).

A disordered region spans residues 27–48 (VPTTDTQRTEDTQHCGEGKGFL). Positions 33 to 43 (QRTEDTQHCGE) are enriched in basic and acidic residues. The N-linked (GlcNAc...) asparagine glycan is linked to Asn73. 5 helical membrane-spanning segments follow: residues 82–102 (GILG…LFLL), 105–125 (VALL…IVGI), 143–163 (AAAL…LYII), 186–206 (MDGN…LALM), and 212–232 (LGYS…AVIY). An intrachain disulfide couples Cys239 to Cys276. N-linked (GlcNAc...) asparagine glycosylation is found at Asn247 and Asn251. Residues 288–308 (AYTIPIMAFAFVCHPEVLPIY) traverse the membrane as a helical segment. A glycan (N-linked (GlcNAc...) asparagine) is linked at Asn324. The next 5 helical transmembrane spans lie at 325-345 (LSIA…YLTF), 367-387 (ILCV…IVLF), 409-429 (VLIA…APNI), 432-452 (IFGI…PAIF), and 472-492 (ALCF…FIII).

Belongs to the amino acid/polyamine transporter 2 family. As to expression, expressed predominantly in liver, moderately expressed in kidney and brain, and barely detectable in heart and muscle. Within liver, expressed in hepatocytes. Not detected in testis. Expressed in cells of the ganglion cell layer, in soma of some cells of the inner nuclear layer (at protein level). Expressed in the inner segments of photoreceptor cells.

It is found in the cell membrane. It localises to the basolateral cell membrane. The enzyme catalyses L-histidine(out) + Na(+)(out) + H(+)(in) = L-histidine(in) + Na(+)(in) + H(+)(out). It carries out the reaction L-glutamine(out) + Na(+)(out) + H(+)(in) = L-glutamine(in) + Na(+)(in) + H(+)(out). The catalysed reaction is L-asparagine(out) + Na(+)(out) + H(+)(in) = L-asparagine(in) + Na(+)(in) + H(+)(out). In terms of biological role, symporter that cotransports specific neutral amino acids and sodium ions, coupled to an H(+) antiporter activity. Mainly participates in the glutamate-GABA-glutamine cycle in brain where it transports L-glutamine from astrocytes in the intercellular space for the replenishment of both neurotransmitters glutamate and gamma-aminobutyric acid (GABA) in neurons and also functions as the major influx transporter in ganglion cells mediating the uptake of glutamine. The transport activity is specific for L-glutamine, L-histidine and L-asparagine. The transport is electroneutral coupled to the cotransport of 1 Na(+) and the antiport of 1 H(+). The transport is pH dependent, saturable, Li(+) tolerant and functions in both direction depending on the concentration gradients of its substrates and cotransported ions. Also mediates an amino acid-gated H(+) conductance that is not stoichiometrically coupled to the amino acid transport but which influences the ionic gradients that drive the amino acid transport. In addition, may play a role in nitrogen metabolism, amino acid homeostasis, glucose metabolism and renal ammoniagenesis. The chain is Sodium-coupled neutral amino acid transporter 3 from Mus musculus (Mouse).